Reading from the N-terminus, the 215-residue chain is Cytochrome b6 (215 aa).

The chain crosses the membrane as a helical span at residues 32-52 (IFYCLGGITLTCFLVQVASGF). A heme c-binding site is contributed by cysteine 35. Heme b is bound by residues histidine 86 and histidine 100. 3 consecutive transmembrane segments (helical) span residues 90-110 (ASMM…TGGF), 116-136 (LTWV…VTGY), and 186-206 (LHTF…FLMI). Histidine 187 and histidine 202 together coordinate heme b.

Belongs to the cytochrome b family. PetB subfamily. In terms of assembly, the 4 large subunits of the cytochrome b6-f complex are cytochrome b6, subunit IV (17 kDa polypeptide, PetD), cytochrome f and the Rieske protein, while the 4 small subunits are PetG, PetL, PetM and PetN. The complex functions as a dimer. Heme b serves as cofactor. It depends on heme c as a cofactor.

The protein resides in the plastid. It is found in the chloroplast thylakoid membrane. In terms of biological role, component of the cytochrome b6-f complex, which mediates electron transfer between photosystem II (PSII) and photosystem I (PSI), cyclic electron flow around PSI, and state transitions. The polypeptide is Cytochrome b6 (Anthoceros angustus (Hornwort)).